Reading from the N-terminus, the 327-residue chain is MPHLAELVAQAKAAIEEAQDVAALDSVRVEYLGKKGHLTLQMSTLRDLPAEERPAAGAVINQAKQEVQQALNARKEQMESALLNERLAAEKIDVSLPGRRIENGGLHPVTRTIERIETFFGELGFSVESGPEIEDDYHNFDALNIPAHHPARADHDTFWFDAKRLLRTQTSGVQIRTMQNKQPPIRIIAPGRVYRNDYDQTHTPMFHQVEGLIVDKDISFTNLKGTLHDFLKNFFEEDMEIRFRPSYFPFTEPSAEVDVMGKNGKWLEVLGCGMVHPNVLRNVGIDPEVYSGFAFGMGMERLTMLRYGVTDLRSFFENDLRFLKQFK.

A Mg(2+)-binding site is contributed by Glu252.

This sequence belongs to the class-II aminoacyl-tRNA synthetase family. Phe-tRNA synthetase alpha subunit type 1 subfamily. In terms of assembly, tetramer of two alpha and two beta subunits. Mg(2+) is required as a cofactor.

It localises to the cytoplasm. The catalysed reaction is tRNA(Phe) + L-phenylalanine + ATP = L-phenylalanyl-tRNA(Phe) + AMP + diphosphate + H(+). This chain is Phenylalanine--tRNA ligase alpha subunit, found in Proteus mirabilis (strain HI4320).